A 331-amino-acid chain; its full sequence is Probable 5-dehydro-4-deoxyglucarate dehydratase 2 (331 aa).

The interval 1-23 (MSADTDTDTDTGTGTGPDTDTGT) is disordered. Over residues 10–23 (DTGTGTGPDTDTGT) the composition is skewed to low complexity.

This sequence belongs to the DapA family.

It carries out the reaction 5-dehydro-4-deoxy-D-glucarate + H(+) = 2,5-dioxopentanoate + CO2 + H2O. Its pathway is carbohydrate acid metabolism; D-glucarate degradation; 2,5-dioxopentanoate from D-glucarate: step 2/2. The sequence is that of Probable 5-dehydro-4-deoxyglucarate dehydratase 2 from Streptomyces avermitilis (strain ATCC 31267 / DSM 46492 / JCM 5070 / NBRC 14893 / NCIMB 12804 / NRRL 8165 / MA-4680).